Reading from the N-terminus, the 30-residue chain is Dermonecrotic toxin LlSicTox-alphaIII-1 (30 aa).

His-12 is a catalytic residue.

Belongs to the arthropod phospholipase D family. Class I subfamily. Requires Mg(2+) as cofactor. Post-translationally, contains 1 disulfide bond. In terms of tissue distribution, expressed by the venom gland.

It is found in the secreted. It carries out the reaction an N-(acyl)-sphingosylphosphocholine = an N-(acyl)-sphingosyl-1,3-cyclic phosphate + choline. The catalysed reaction is an N-(acyl)-sphingosylphosphoethanolamine = an N-(acyl)-sphingosyl-1,3-cyclic phosphate + ethanolamine. It catalyses the reaction a 1-acyl-sn-glycero-3-phosphocholine = a 1-acyl-sn-glycero-2,3-cyclic phosphate + choline. The enzyme catalyses a 1-acyl-sn-glycero-3-phosphoethanolamine = a 1-acyl-sn-glycero-2,3-cyclic phosphate + ethanolamine. Its function is as follows. Dermonecrotic toxins cleave the phosphodiester linkage between the phosphate and headgroup of certain phospholipids (sphingolipid and lysolipid substrates), forming an alcohol (often choline) and a cyclic phosphate. This toxin acts on sphingomyelin (SM). It may also act on ceramide phosphoethanolamine (CPE), lysophosphatidylcholine (LPC) and lysophosphatidylethanolamine (LPE), but not on lysophosphatidylserine (LPS), and lysophosphatidylglycerol (LPG). It acts by transphosphatidylation, releasing exclusively cyclic phosphate products as second products. In vivo, intradermal injection induces dermonecrosis. Induces hemolysis, increased vascular permeability, edema, inflammatory response, and platelet aggregation. The polypeptide is Dermonecrotic toxin LlSicTox-alphaIII-1 (Loxosceles laeta (South American recluse spider)).